Consider the following 38-residue polypeptide: Toxin Bcg III 31.16 (38 aa).

3 cysteine pairs are disulfide-bonded: C4-C37, C6-C30, and C20-C38.

The protein belongs to the sea anemone type 3 (BDS) potassium channel toxin family.

Its subcellular location is the secreted. It is found in the nematocyst. Possible modulator of crustacean voltage-gated sodium channels (Nav). The sequence is that of Toxin Bcg III 31.16 from Bunodosoma cangicum (Sea anemone).